We begin with the raw amino-acid sequence, 77 residues long: Coiled-coil-helix-coiled-coil-helix domain-containing protein C550.01c (77 aa).

The CHCH domain occupies 24-65; the sequence is KGGCVEEHLRLNDCYWDTHDWRKCTEQMEEFRKCWEKRHGPL. 2 consecutive short sequence motifs (cx9C motif) follow at residues 27 to 37 and 47 to 57; these read CVEEHLRLNDC and CTEQMEEFRKC. 2 cysteine pairs are disulfide-bonded: Cys-27–Cys-57 and Cys-37–Cys-47.

It is found in the cytoplasm. The protein localises to the nucleus. The chain is Coiled-coil-helix-coiled-coil-helix domain-containing protein C550.01c from Schizosaccharomyces pombe (strain 972 / ATCC 24843) (Fission yeast).